A 477-amino-acid polypeptide reads, in one-letter code: MLDFINLINNINNPTSPTKITPKVIPIKYEIKDILVDSDEEKYECDICTLELFIESEPKALQCKEGHLACRRCWERYLSTNKQCMTCKTPISSISELSRNRYLEKEYSNWLNDRLVFCPNSNENVFRLNMSGLPAINNSNQTLHQDLCNHGAMKFSELQNHYKACESRILQCNLCLIKFCSKDSDKHQNECSKVYSKCEFCNSNILRSSLSDHHKTHCTKYLIECPHCKIMIKRDTITKHINDDCEEIMITCSEYLCGKRFTRSKMQIHSLEHSVTKLMNQNEIIKKDNQNLDQEKKIEEIKLKLNNLLNNYIQLKNEIAVLKQNSFKEMVYSNKWIIPEYRSFNALYTHKKSKNSNDFQVGSHTFYIKIYPNGQAGKQGKFGVFLERKPRYGILLKYMFSFSLLPPEDSTATKVSLGPIHRVLILLLIDFEESRSLSCGTNVFTDSRKVLKDFLNEKGELEISFSITIQDEKIIPL.

The segment at 45-88 (CDICTLELFIESEPKALQCKEGHLACRRCWERYLSTNKQCMTCK) adopts an RING-type; degenerate zinc-finger fold. 2 consecutive TRAF-type zinc fingers follow at residues 160–211 (NHYK…SSLS) and 212–267 (DHHK…SKMQ). A coiled-coil region spans residues 271-326 (LEHSVTKLMNQNEIIKKDNQNLDQEKKIEEIKLKLNNLLNNYIQLKNEIAVLKQNS). Positions 331-463 (VYSNKWIIPE…FLNEKGELEI (133 aa)) constitute an MATH domain.

The protein belongs to the TNF receptor-associated factor family. A subfamily.

It localises to the cytoplasm. Its function is as follows. Probable adapter protein and signal transducer that links members of the tumor necrosis factor receptor family to different signaling pathways by association with the receptor cytoplasmic domain and kinases. This Dictyostelium discoideum (Social amoeba) protein is TNF receptor-associated factor family protein DDB_G0278133.